We begin with the raw amino-acid sequence, 332 residues long: Flotillin-like protein FloA (332 aa).

The helical transmembrane segment at 9–29 (FILIGGGIIFVVLFFHYVPFF) threads the bilayer.

Belongs to the flotillin-like FloA family. As to quaternary structure, homooligomerizes.

It is found in the cell membrane. Its subcellular location is the membrane raft. Found in functional membrane microdomains (FMM) that may be equivalent to eukaryotic membrane rafts. FMMs are highly dynamic and increase in number as cells age. Flotillins are thought to be important factors in membrane fluidity. The chain is Flotillin-like protein FloA from Phocaeicola vulgatus (strain ATCC 8482 / DSM 1447 / JCM 5826 / CCUG 4940 / NBRC 14291 / NCTC 11154) (Bacteroides vulgatus).